A 171-amino-acid chain; its full sequence is CASP-like protein 1C3 (171 aa).

At 1–6 (MVKPKR) the chain is on the cytoplasmic side. The helical transmembrane segment at 7-27 (LLSLLLRLIAFGATLAAVIIM) threads the bilayer. Over 28–52 (ATSHEKGSFFALSYEAKYSDTPAFK) the chain is Extracellular. Residues 53–73 (YFVIANAIVTVYGFLALFIPS) traverse the membrane as a helical segment. At 74–79 (ESPLWR) the chain is on the cytoplasmic side. The chain crosses the membrane as a helical span at residues 80-100 (LVLALDLVFTMLLISSISAAL). The Extracellular segment spans residues 101-130 (AVAQVGKKGNSSAGWLPVCGQVTKYCNQVT). A glycan (N-linked (GlcNAc...) asparagine) is linked at N110. A helical transmembrane segment spans residues 131 to 151 (GALVAGFIAIITYIILLLYSI). Topologically, residues 152–171 (YTFLNSLLGKTPCRLSSPGI) are cytoplasmic.

It belongs to the Casparian strip membrane proteins (CASP) family. Homodimer and heterodimers.

Its subcellular location is the cell membrane. The polypeptide is CASP-like protein 1C3 (Populus trichocarpa (Western balsam poplar)).